A 981-amino-acid chain; its full sequence is Calsyntenin-1 (981 aa).

An N-terminal signal peptide occupies residues 1 to 28 (MLRRPAPALAPAARLLLAGLLCGGGVWA). Topologically, residues 29 to 859 (ARVNKHKPWL…PHPFAVVPST (831 aa)) are extracellular. 2 Cadherin domains span residues 38 to 164 (LEPT…APVF) and 165 to 265 (KEKS…TPGW). N346, N366, and N515 each carry an N-linked (GlcNAc...) asparagine glycan. A helical membrane pass occupies residues 860-880 (ATVVIVVCVSFLVFMIILGVF). Residues 881–981 (RIRAAHRRTM…LEWDDSTLSY (101 aa)) lie on the Cytoplasmic side of the membrane. Residues 915 to 981 (METYEDQHSS…LEWDDSTLSY (67 aa)) form a disordered region. Residues 925–960 (EEEEEEEEEEESEDGEEEDDITSAESESSEEEEGEQ) show a composition bias toward acidic residues. Residues 962-981 (DPQNATRQQQLEWDDSTLSY) are compositionally biased toward polar residues.

It belongs to the calsyntenin family. In terms of assembly, directly interacts with APBA2. Forms a tripartite complex with APBA2 and APP. Interacts with KLC1. As to quaternary structure, interacts with APBB1; this interaction stabilizes AlcICD metabolism. Interacts with PSEN1. Proteolytically processed under normal cellular conditions. A primary zeta-cleavage generates a large extracellular (soluble) N-terminal domain (sAlc) and a short C-terminal transmembrane fragment (CTF1). A secondary cleavage catalyzed by presenilin gamma-secretase within the transmembrane domain releases the beta-Alc-alpha chain in the extracellular milieu and produces an intracellular fragment (AlcICD). This processing is strongly suppressed in the tripartite complex formed with APBA2 and APP, which seems to prevent the association with PSEN1. As to expression, expressed in the brain and, a lower level, in the heart, skeletal muscle, kidney and placenta. Accumulates in dystrophic neurites around the amyloid core of Alzheimer disease senile plaques (at protein level).

The protein resides in the postsynaptic cell membrane. It localises to the endoplasmic reticulum membrane. It is found in the golgi apparatus membrane. Its subcellular location is the cell projection. The protein localises to the neuron projection. The protein resides in the nucleus. In terms of biological role, postsynaptic adhesion molecule that binds to presynaptic neurexins to mediate both excitatory and inhibitory synapse formation. Promotes synapse development by acting as a cell adhesion molecule at the postsynaptic membrane, which associates with neurexin-alpha at the presynaptic membrane. Also functions as a cargo in axonal anterograde transport by acting as a molecular adapter that promotes KLC1 association with vesicles. Complex formation with APBA2 and APP, stabilizes APP metabolism and enhances APBA2-mediated suppression of beta-APP40 secretion, due to the retardation of intracellular APP maturation. Functionally, as intracellular fragment AlcICD, suppresses APBB1-dependent transactivation stimulated by APP C-terminal intracellular fragment (AICD), most probably by competing with AICD for APBB1-binding. In complex with APBA2 and C99, a C-terminal APP fragment, abolishes C99 interaction with PSEN1 and thus APP C99 cleavage by gamma-secretase, most probably through stabilization of the direct interaction between APBA2 and APP. The chain is Calsyntenin-1 from Homo sapiens (Human).